A 317-amino-acid chain; its full sequence is Methionyl-tRNA formyltransferase (317 aa).

109–112 (SLLP) contacts (6S)-5,6,7,8-tetrahydrofolate.

The protein belongs to the Fmt family.

It catalyses the reaction L-methionyl-tRNA(fMet) + (6R)-10-formyltetrahydrofolate = N-formyl-L-methionyl-tRNA(fMet) + (6S)-5,6,7,8-tetrahydrofolate + H(+). Its function is as follows. Attaches a formyl group to the free amino group of methionyl-tRNA(fMet). The formyl group appears to play a dual role in the initiator identity of N-formylmethionyl-tRNA by promoting its recognition by IF2 and preventing the misappropriation of this tRNA by the elongation apparatus. The sequence is that of Methionyl-tRNA formyltransferase from Desulforamulus reducens (strain ATCC BAA-1160 / DSM 100696 / MI-1) (Desulfotomaculum reducens).